The primary structure comprises 268 residues: Small ribosomal subunit protein uS2 (268 aa).

The interval 233 to 268 (SVREEEFAEAAAEGEEKPARRAPAKKAAKKGDDAQA) is disordered.

The protein belongs to the universal ribosomal protein uS2 family.

This is Small ribosomal subunit protein uS2 from Stenotrophomonas maltophilia (strain K279a).